The sequence spans 1170 residues: Cellulose synthase-like protein D2 (1170 aa).

Disordered stretches follow at residues 1-75 (MASN…PESG) and 269-295 (NEVDNGGGGGGGGGLGGGDGQPAEFTS). Over residues 10–24 (RHSNSSRLSRMSYSG) the composition is skewed to low complexity. Positions 273–288 (NGGGGGGGGGLGGGDG) are enriched in gly residues. The next 2 membrane-spanning stretches (helical) occupy residues 311–331 (VLSPYRLLILIRMAVLGLFLA) and 341–361 (AMWLWGMSVVCELWFGLSWLL). D441 is an active-site residue. The stretch at 527-551 (HAREEIKAMKRQREAALDDVVEAVK) forms a coiled coil. The active site involves D873. A run of 6 helical transmembrane segments spans residues 955-975 (IFLIVYCFLPALSLFSGQFIV), 981-1001 (TFLTYLLVITLTMCMLAVLEI), 1027-1047 (LAAVLQGLLKVIAGIEISFTL), 1070-1090 (SLMIPPIVIMMVNLIAIAVGF), 1104-1124 (LLGGVFFSFWVLAHLYPFAKG), and 1134-1154 (TIVFVWSGLLAITISLLWVAI).

The protein belongs to the glycosyltransferase 2 family. Plant cellulose synthase-like D subfamily.

It is found in the golgi apparatus membrane. In terms of biological role, thought to be a Golgi-localized beta-glycan synthase that polymerize the backbones of noncellulosic polysaccharides (hemicelluloses) of plant cell wall. The chain is Cellulose synthase-like protein D2 (CSLD2) from Oryza sativa subsp. indica (Rice).